Reading from the N-terminus, the 183-residue chain is Caltractin ICL1c (183 aa).

Positions 1–30 are disordered; it reads MARRGQQPPPQQQQAPPTQKNQAGKFNPAE. EF-hand domains follow at residues 39-74, 75-110, 112-147, and 148-183; these read EEVL…LGFE, AKNQ…RISE, DSKA…LGET, and MDDS…KTFA. Residues Asp52, Asp54, Thr56, Ser58, Glu63, Asp88, Asp90, Ser92, Gln94, and Glu99 each contribute to the Ca(2+) site.

Belongs to the centrin family. Monomer.

The protein resides in the cytoplasm. It is found in the cytoskeleton. Plays a fundamental role in microtubule organizing center structure and function. Component of the infraciliary lattice (ICL) and the ciliary basal bodies. The protein is Caltractin ICL1c (Icl1c) of Paramecium tetraurelia.